Reading from the N-terminus, the 452-residue chain is Cobyrinate a,c-diamide synthase (452 aa).

The GATase cobBQ-type domain occupies 248 to 441 (RVAYALDAAF…LHIHFYQNLA (194 aa)). Cysteine 330 functions as the Nucleophile in the catalytic mechanism.

This sequence belongs to the CobB/CbiA family. The cofactor is Mg(2+).

The enzyme catalyses cob(II)yrinate + 2 L-glutamine + 2 ATP + 2 H2O = cob(II)yrinate a,c diamide + 2 L-glutamate + 2 ADP + 2 phosphate + 2 H(+). The protein operates within cofactor biosynthesis; adenosylcobalamin biosynthesis; cob(II)yrinate a,c-diamide from sirohydrochlorin (anaerobic route): step 10/10. Functionally, catalyzes the ATP-dependent amidation of the two carboxylate groups at positions a and c of cobyrinate, using either L-glutamine or ammonia as the nitrogen source. This Listeria monocytogenes serovar 1/2a (strain ATCC BAA-679 / EGD-e) protein is Cobyrinate a,c-diamide synthase.